We begin with the raw amino-acid sequence, 701 residues long: 2-isopropylmalate synthase (701 aa).

Residues 1-40 (MTTSESPDAYTESFGAHTIVKPAGPPRVGQPSWNPQRASS) are disordered. Polar residues predominate over residues 31–40 (PSWNPQRASS). A Pyruvate carboxyltransferase domain is found at 72-346 (PLWCAVDLRD…DPQIDFSNID (275 aa)). 4 residues coordinate Mg(2+): D81, H285, H287, and N321. The segment at 491–701 (PVRPLERIRQ…VVSAVNRAAR (211 aa)) is regulatory domain. The stretch at 575 to 593 (VTIASPAQPGEAGRHASDP) is one VNTR1 repeat. The disordered stretch occupies residues 581–670 (AQPGEAGRHA…EAGRHASDPV (90 aa)). A VNTR2 repeat occupies 594–612 (VTIASPAQPGEAGRHASDP). Residues 613–631 (VTIASPAQPGEAGRHASDP) form a VNTR3 repeat. The stretch at 632–650 (VTIASPAQPGEAGRHASDP) is one VNTR4 repeat. A VNTR5 repeat occupies 651–669 (VTIASPAQPGEAGRHASDP).

The protein belongs to the alpha-IPM synthase/homocitrate synthase family. LeuA type 2 subfamily. In terms of assembly, homodimer. It depends on Mg(2+) as a cofactor.

It is found in the cytoplasm. The catalysed reaction is 3-methyl-2-oxobutanoate + acetyl-CoA + H2O = (2S)-2-isopropylmalate + CoA + H(+). Its pathway is amino-acid biosynthesis; L-leucine biosynthesis; L-leucine from 3-methyl-2-oxobutanoate: step 1/4. Functionally, catalyzes the condensation of the acetyl group of acetyl-CoA with 3-methyl-2-oxobutanoate (2-ketoisovalerate) to form 3-carboxy-3-hydroxy-4-methylpentanoate (2-isopropylmalate). The chain is 2-isopropylmalate synthase from Mycobacterium bovis (strain ATCC BAA-935 / AF2122/97).